Here is a 489-residue protein sequence, read N- to C-terminus: Glycogen synthase (489 aa).

K15 serves as a coordination point for ADP-alpha-D-glucose.

The protein belongs to the glycosyltransferase 1 family. Bacterial/plant glycogen synthase subfamily.

The catalysed reaction is [(1-&gt;4)-alpha-D-glucosyl](n) + ADP-alpha-D-glucose = [(1-&gt;4)-alpha-D-glucosyl](n+1) + ADP + H(+). It functions in the pathway glycan biosynthesis; glycogen biosynthesis. Synthesizes alpha-1,4-glucan chains using ADP-glucose. The protein is Glycogen synthase of Francisella tularensis subsp. mediasiatica (strain FSC147).